The following is a 474-amino-acid chain: Cyclin-dependent kinase 2 homolog (474 aa).

The 440-residue stretch at 7–446 (YRHVVKLGEG…AAEAVHHPYL (440 aa)) folds into the Protein kinase domain. Residues 13-21 (LGEGTYGMV) and K36 each bind ATP. Phosphothreonine is present on T17. Y18 is modified (phosphotyrosine). D131 serves as the catalytic Proton acceptor. A disordered region spans residues 150 to 200 (TALPSSPQQSMRVPHAGGTNGEAGRASANGNEHAPRPTAAEGSVSPWEEAA). S230 is subject to Phosphoserine. A compositionally biased stretch (low complexity) spans 334–354 (QQLQAQQQQPQQGSSPSHSSS). Positions 334-356 (QQLQAQQQQPQQGSSPSHSSSRA) are disordered.

The protein belongs to the protein kinase superfamily. CMGC Ser/Thr protein kinase family. CDC2/CDKX subfamily. As to quaternary structure, may form a complex composed of at least the catalytic subunit CRK2 and a cyclin. Mg(2+) is required as a cofactor.

The protein localises to the cytoplasm. The enzyme catalyses L-seryl-[protein] + ATP = O-phospho-L-seryl-[protein] + ADP + H(+). The catalysed reaction is L-threonyl-[protein] + ATP = O-phospho-L-threonyl-[protein] + ADP + H(+). It carries out the reaction [DNA-directed RNA polymerase] + ATP = phospho-[DNA-directed RNA polymerase] + ADP + H(+). With respect to regulation, phosphorylation at Thr-17 or Tyr-18 inactivates the enzyme, while phosphorylation at Ser-230 activates it. In terms of biological role, serine/threonine-protein kinase. Involved in the control of the cell cycle. Required for entry into S-phase and mitosis. Probable component of the kinase complex that phosphorylates the repetitive C-terminus of RNA polymerase II. The protein is Cyclin-dependent kinase 2 homolog of Crithidia fasciculata.